We begin with the raw amino-acid sequence, 109 residues long: Small ribosomal subunit protein uS17 (109 aa).

The protein belongs to the universal ribosomal protein uS17 family. As to quaternary structure, part of the 30S ribosomal subunit.

One of the primary rRNA binding proteins, it binds specifically to the 5'-end of 16S ribosomal RNA. The polypeptide is Small ribosomal subunit protein uS17 (Thermoplasma acidophilum (strain ATCC 25905 / DSM 1728 / JCM 9062 / NBRC 15155 / AMRC-C165)).